Consider the following 291-residue polypeptide: Small ribosomal subunit protein uS2 (291 aa).

Acidic residues predominate over residues 238-247 (DEESGDELDE). The segment at 238-291 (DEESGDELDESVSLHEEGREITDYENYTPPEEREYSVNDEGDVFDEDESLYEGR) is disordered. Residues 249-259 (VSLHEEGREIT) show a composition bias toward basic and acidic residues. The span at 274–291 (VNDEGDVFDEDESLYEGR) shows a compositional bias: acidic residues.

This sequence belongs to the universal ribosomal protein uS2 family.

The protein is Small ribosomal subunit protein uS2 (rpsB) of Treponema pallidum (strain Nichols).